Consider the following 392-residue polypeptide: Chaperone protein DnaJ (392 aa).

Residues 2–67 (DYYSILGISK…QKRDSYDRFG (66 aa)) form the J domain. The CR-type zinc finger occupies 148–226 (GVEKELVVSG…CRGQGRVKDK (79 aa)). Zn(2+) is bound by residues C161, C164, C178, C181, C200, C203, C214, and C217. CXXCXGXG motif repeat units lie at residues 161-168 (CETCSGQG), 178-185 (CERCKGSG), 200-207 (CPECGGEG), and 214-221 (CSSCRGQG).

Belongs to the DnaJ family. In terms of assembly, homodimer. It depends on Zn(2+) as a cofactor.

The protein resides in the cytoplasm. Its function is as follows. Participates actively in the response to hyperosmotic and heat shock by preventing the aggregation of stress-denatured proteins and by disaggregating proteins, also in an autonomous, DnaK-independent fashion. Unfolded proteins bind initially to DnaJ; upon interaction with the DnaJ-bound protein, DnaK hydrolyzes its bound ATP, resulting in the formation of a stable complex. GrpE releases ADP from DnaK; ATP binding to DnaK triggers the release of the substrate protein, thus completing the reaction cycle. Several rounds of ATP-dependent interactions between DnaJ, DnaK and GrpE are required for fully efficient folding. Also involved, together with DnaK and GrpE, in the DNA replication of plasmids through activation of initiation proteins. This is Chaperone protein DnaJ from Chlamydia pneumoniae (Chlamydophila pneumoniae).